We begin with the raw amino-acid sequence, 108 residues long: UPF0060 membrane protein RER_49640 (108 aa).

4 helical membrane passes run 8-28, 33-53, 62-82, and 87-107; these read LLFVLAALLEIGGAWLVWQGI, GWIWVGLGVISLGLYGLVATM, ILAAYGGIFVAGSLLWAVVMD, and DRFDIAGALICLVGVGVIMYA.

Belongs to the UPF0060 family.

Its subcellular location is the cell membrane. This chain is UPF0060 membrane protein RER_49640, found in Rhodococcus erythropolis (strain PR4 / NBRC 100887).